Reading from the N-terminus, the 190-residue chain is Putative phosphatidylethanolamine-binding protein (190 aa).

The protein belongs to the phosphatidylethanolamine-binding protein family.

The sequence is that of Putative phosphatidylethanolamine-binding protein from Plasmodium falciparum.